The following is a 624-amino-acid chain: Glutaminase 2 (624 aa).

Positions 1-20 are disordered; that stretch reads MDTQPIRLPSVAGATRSAGY. A glutaminase region spans residues 43–325; sequence GELADYIPEL…LSARFDLHML (283 aa). Serine 85, asparagine 134, glutamate 178, asparagine 185, tyrosine 209, tyrosine 261, and valine 279 together coordinate substrate. One can recognise an STAS domain in the interval 355 to 466; the sequence is QQILDERHSD…ALLDDAIEWA (112 aa). Residue 491–608 coordinates a nucleoside 3',5'-cyclic phosphate; it reads LLAELDTDEI…IMRNLAAILA (118 aa).

It belongs to the glutaminase family. In terms of assembly, homotetramer.

It carries out the reaction L-glutamine + H2O = L-glutamate + NH4(+). This Bradyrhizobium diazoefficiens (strain JCM 10833 / BCRC 13528 / IAM 13628 / NBRC 14792 / USDA 110) protein is Glutaminase 2 (glsA2).